We begin with the raw amino-acid sequence, 272 residues long: MSEQNMSIAIDRHHRGMTLDSEQTAIVVKNWNLYYGSKQALHNITMKLPQNRVTAFIGPSGCGKSTLLRCFNRMNDLIDIVSVEGEMLLHGENMYAKEMDVAALRRRVGMVFQKPNPFPKSIYENVCYGLRLQGINDKNVLDETVEWALKGAGLWEEAKDRLDENALGLSGGQQQRLCIARAIAIKPEVLLLDEPTSALDPISTLAIEELIFELKKDFTILIVTHNMQQAARVSDYTAFMYMGDLIEYTDTDSLFTNPQVKRTEDYISGRYG.

The 242-residue stretch at 26–267 (IVVKNWNLYY…PQVKRTEDYI (242 aa)) folds into the ABC transporter domain. Position 58-65 (58-65 (GPSGCGKS)) interacts with ATP.

Belongs to the ABC transporter superfamily. Phosphate importer (TC 3.A.1.7) family. In terms of assembly, the complex is composed of two ATP-binding proteins (PstB), two transmembrane proteins (PstC and PstA) and a solute-binding protein (PstS).

It localises to the cell inner membrane. It carries out the reaction phosphate(out) + ATP + H2O = ADP + 2 phosphate(in) + H(+). Part of the ABC transporter complex PstSACB involved in phosphate import. Responsible for energy coupling to the transport system. This chain is Phosphate import ATP-binding protein PstB, found in Hydrogenovibrio crunogenus (strain DSM 25203 / XCL-2) (Thiomicrospira crunogena).